The primary structure comprises 138 residues: Large ribosomal subunit protein bL17 (138 aa).

It belongs to the bacterial ribosomal protein bL17 family. Part of the 50S ribosomal subunit. Contacts protein L32.

The polypeptide is Large ribosomal subunit protein bL17 (Jannaschia sp. (strain CCS1)).